A 75-amino-acid chain; its full sequence is Vacuolar ATPase assembly integral membrane protein VMA21 (75 aa).

At 1–8 (MPVDVAPG) the chain is on the cytoplasmic side. Residues 9–29 (VIKKLMFFTAAMVICPLLTFF) form a helical membrane-spanning segment. Residues 30-41 (SIKQFTTNTIVS) are Lumenal-facing. Residues 42–62 (GGLAALAANLVLIGYIVVAFM) traverse the membrane as a helical segment. Topologically, residues 63 to 75 (EDTTDVKAESKKD) are cytoplasmic.

Belongs to the VMA21 family.

The protein localises to the endoplasmic reticulum membrane. Its subcellular location is the endoplasmic reticulum-Golgi intermediate compartment membrane. The protein resides in the cytoplasmic vesicle. It localises to the COPII-coated vesicle membrane. Its function is as follows. Required for the assembly of the V0 complex of the vacuolar ATPase (V-ATPase) in the endoplasmic reticulum. In Vanderwaltozyma polyspora (strain ATCC 22028 / DSM 70294 / BCRC 21397 / CBS 2163 / NBRC 10782 / NRRL Y-8283 / UCD 57-17) (Kluyveromyces polysporus), this protein is Vacuolar ATPase assembly integral membrane protein VMA21.